A 78-amino-acid polypeptide reads, in one-letter code: Small acidic protein 2 (78 aa).

Expressed in siliques and anthers.

Functionally, mediates responses to the synthetic auxin 2,4-dichlorophenoxyacetic acid (2,4-D). Not involved in the response to indole-3-acetic acid (IAA). May interact with RUB modification-related components and may regulate the culling-ring ubiquitin E3 ligase complex (CRL) activity. This chain is Small acidic protein 2 (SMAP2), found in Arabidopsis thaliana (Mouse-ear cress).